The following is a 378-amino-acid chain: MDCSFPEGDPAAVCGKRQQFGSRFLSDPARVFHHNAWDNVEWSEEQAAEAERKVQENSTQRVCQEKQADYEINANKYWNNFYKIHENGFFKDRHWLFTEFPELAPSQNHLKNLLSENKRSEVYEYYRSGEDGPDLTIEEQHRCSSVSLGDKTQPPLTEESVTQKLHHLEICANEFPGSSATYRILEVGCGVGNTVFPILQTNNDPSLFVYCCDFSSTAVELVQTNSAYDPSRCFAFVHDLCDEDKSYPMPENSLDVIILIFVLSAIVPDKMQNAINRLSRLLKPGGIMLLRDYGRYDMAQLRFKKGQCLSENFYVRGDGTRVYFFTQDELDTLFTTAGLEKVQNLVDRRLQVNRGKQLTMYRVWIQCKYRKPLGSSTG.

Positions 78, 82, 188, 213, 239, 240, and 260 each coordinate S-adenosyl-L-methionine.

The protein belongs to the methyltransferase superfamily. METL family. As to quaternary structure, monomer. Interacts with DALRD3.

It is found in the cytoplasm. It carries out the reaction cytidine(32) in tRNA(Thr) + S-adenosyl-L-methionine = N(3)-methylcytidine(32) in tRNA(Thr) + S-adenosyl-L-homocysteine + H(+). It catalyses the reaction cytidine(32) in tRNA(Arg)(CCU) + S-adenosyl-L-methionine = N(3)-methylcytidine(32) in tRNA(Arg)(CCU) + S-adenosyl-L-homocysteine + H(+). Its function is as follows. S-adenosyl-L-methionine-dependent methyltransferase that mediates N(3)-methylcytidine modification of residue 32 of the tRNA anticodon loop of tRNA(Thr)(UGU) and tRNA(Arg)(CCU). N(3)-methylcytidine methylation by METTL2 requires the N6-threonylcarbamoylation of tRNA (t6A37) by the EKC/KEOPS complex as prerequisite. The protein is tRNA N(3)-cytidine methyltransferase METTL2 (METTL2) of Bos taurus (Bovine).